Consider the following 146-residue polypeptide: Hemoglobin subunit beta-1/2 (146 aa).

The Globin domain maps to 2–146; the sequence is EWTDKERSII…VVSALGKQYH (145 aa). Heme b is bound by residues H63 and H92.

It belongs to the globin family. In terms of assembly, hb1 is a heterotetramer of two alpha-1 chains and two beta chains. Hb2 is a heterotetramer of two alpha-2 chains and two beta chains. As to expression, red blood cells.

Involved in oxygen transport from gills to the various peripheral tissues. The sequence is that of Hemoglobin subunit beta-1/2 from Trematomus newnesi (Dusky notothen).